Here is a 441-residue protein sequence, read N- to C-terminus: Ribosomal protein uS12 methylthiotransferase RimO (441 aa).

The MTTase N-terminal domain maps to 7 to 117 (PKISFVSLGC…VLEAVHRAKP (111 aa)). Cys-16, Cys-52, Cys-81, Cys-148, Cys-152, and Cys-155 together coordinate [4Fe-4S] cluster. The Radical SAM core domain occupies 134–371 (LTPRHYAYLK…MARQQVISAR (238 aa)). The region spanning 374 to 440 (KRKVGTRQQI…AYDLHGTVAG (67 aa)) is the TRAM domain.

Belongs to the methylthiotransferase family. RimO subfamily. Requires [4Fe-4S] cluster as cofactor.

It is found in the cytoplasm. The enzyme catalyses L-aspartate(89)-[ribosomal protein uS12]-hydrogen + (sulfur carrier)-SH + AH2 + 2 S-adenosyl-L-methionine = 3-methylsulfanyl-L-aspartate(89)-[ribosomal protein uS12]-hydrogen + (sulfur carrier)-H + 5'-deoxyadenosine + L-methionine + A + S-adenosyl-L-homocysteine + 2 H(+). In terms of biological role, catalyzes the methylthiolation of an aspartic acid residue of ribosomal protein uS12. In Rhodopseudomonas palustris (strain BisB5), this protein is Ribosomal protein uS12 methylthiotransferase RimO.